Reading from the N-terminus, the 388-residue chain is Flap endonuclease 1 (388 aa).

An N-domain region spans residues 1 to 105 (MGIKNLTSLI…GELAKRYARR (105 aa)). Mg(2+) is bound at residue Asp-34. Arg-71 contributes to the DNA binding site. Asp-87, Glu-159, Glu-161, Asp-180, and Asp-182 together coordinate Mg(2+). An I-domain region spans residues 123 to 254 (DVQKFQKRTI…KKSFDMITKH (132 aa)). Glu-159 provides a ligand contact to DNA. Residues Gly-232 and Asp-234 each contribute to the DNA site. Residue Asp-234 participates in Mg(2+) binding. Residues 338 to 346 (VQTRIDTFF) are interaction with PCNA. The disordered stretch occupies residues 349–388 (IKRPRDEDAGSAKKKQKTVAKPGAAGSKKKPAAKKAAGKK). The span at 375–388 (SKKKPAAKKAAGKK) shows a compositional bias: basic residues.

This sequence belongs to the XPG/RAD2 endonuclease family. FEN1 subfamily. In terms of assembly, interacts with PCNA. Three molecules of repG bind to one PCNA trimer with each molecule binding to one PCNA monomer. PCNA stimulates the nuclease activity without altering cleavage specificity. It depends on Mg(2+) as a cofactor. Post-translationally, phosphorylated. Phosphorylation upon DNA damage induces relocalization to the nuclear plasma.

Its subcellular location is the nucleus. The protein resides in the nucleolus. It localises to the nucleoplasm. The protein localises to the mitochondrion. Its function is as follows. Structure-specific nuclease with 5'-flap endonuclease and 5'-3' exonuclease activities involved in DNA replication and repair. During DNA replication, cleaves the 5'-overhanging flap structure that is generated by displacement synthesis when DNA polymerase encounters the 5'-end of a downstream Okazaki fragment. It enters the flap from the 5'-end and then tracks to cleave the flap base, leaving a nick for ligation. Also involved in the long patch base excision repair (LP-BER) pathway, by cleaving within the apurinic/apyrimidinic (AP) site-terminated flap. Acts as a genome stabilization factor that prevents flaps from equilibrating into structures that lead to duplications and deletions. Also possesses 5'-3' exonuclease activity on nicked or gapped double-stranded DNA, and exhibits RNase H activity. Also involved in replication and repair of rDNA and in repairing mitochondrial DNA. This chain is Flap endonuclease 1, found in Heterostelium pallidum (strain ATCC 26659 / Pp 5 / PN500) (Cellular slime mold).